The sequence spans 778 residues: Endonuclease MutS2 (778 aa).

ATP is bound at residue 328–335 (GPNTGGKT). The region spanning 702–777 (LDLRGKRYEE…GSGATIVTFK (76 aa)) is the Smr domain.

This sequence belongs to the DNA mismatch repair MutS family. MutS2 subfamily. In terms of assembly, homodimer. Binds to stalled ribosomes, contacting rRNA.

Its function is as follows. Endonuclease that is involved in the suppression of homologous recombination and thus may have a key role in the control of bacterial genetic diversity. Acts as a ribosome collision sensor, splitting the ribosome into its 2 subunits. Detects stalled/collided 70S ribosomes which it binds and splits by an ATP-hydrolysis driven conformational change. Acts upstream of the ribosome quality control system (RQC), a ribosome-associated complex that mediates the extraction of incompletely synthesized nascent chains from stalled ribosomes and their subsequent degradation. Probably generates substrates for RQC. The sequence is that of Endonuclease MutS2 from Streptococcus pneumoniae serotype 19F (strain G54).